A 99-amino-acid polypeptide reads, in one-letter code: Putative septation protein SpoVG (99 aa).

This sequence belongs to the SpoVG family.

Its function is as follows. Could be involved in septation. This is Putative septation protein SpoVG from Myxococcus xanthus (strain DK1622).